The following is a 601-amino-acid chain: COP9 signalosome complex subunit 1 (601 aa).

Residues 1-10 (MQNELLDDPM) are compositionally biased toward acidic residues. 2 disordered regions span residues 1 to 54 (MQNE…LDNP) and 268 to 294 (DADD…PYMV). Over residues 14–24 (APAAEAAAADE) the composition is skewed to low complexity. The region spanning 338–500 (TILQIKTECL…GIVRILDERD (163 aa)) is the PCI domain. Residues 535 to 581 (SISDKETRPKRKNQKESAKFDRNFGGIDVDEDPRGIAGPSGLSDDFN) are disordered.

This sequence belongs to the CSN1 family. In terms of assembly, component of the CSN complex, probably composed of csn-1, csn-2, csn-3, csn-4, csn-5, csn-6 and csn-7. Within the complex it probably interacts directly with csn-2, csn-4 and csn-5. May interact with itself. Interacts with rbx-1.

It localises to the cytoplasm. It is found in the nucleus. Functionally, essential component of the COP9 signalosome complex (CSN), a complex involved in various cellular and developmental processes. The CSN complex is an essential regulator of the ubiquitin (Ubl) conjugation pathway by mediating the deneddylation of the cullin subunits of the SCF-type E3 ligase complexes, leading to decrease the Ubl ligase activity of SCF. The CSN complex plays an essential role in embryogenesis and oogenesis and is required to regulate microtubule stability in the early embryo. Mediates mei-3/katanin targeting for degradation at the meiosis to mitosis transition via deneddylation of cul-3. The sequence is that of COP9 signalosome complex subunit 1 (csn-1) from Caenorhabditis elegans.